The sequence spans 466 residues: Asparagine--tRNA ligase (466 aa).

It belongs to the class-II aminoacyl-tRNA synthetase family. Homodimer.

Its subcellular location is the cytoplasm. It carries out the reaction tRNA(Asn) + L-asparagine + ATP = L-asparaginyl-tRNA(Asn) + AMP + diphosphate + H(+). In Shewanella baltica (strain OS195), this protein is Asparagine--tRNA ligase.